Here is a 286-residue protein sequence, read N- to C-terminus: Fructose-bisphosphate aldolase (286 aa).

D-glyceraldehyde 3-phosphate is bound at residue serine 50. Aspartate 85 functions as the Proton donor in the catalytic mechanism. 4 residues coordinate Zn(2+): histidine 86, aspartate 107, glutamate 137, and histidine 181. Glycine 182 provides a ligand contact to dihydroxyacetone phosphate. Histidine 209 is a Zn(2+) binding site. Dihydroxyacetone phosphate is bound by residues 210–212 (GGT) and 231–234 (NVNT).

It belongs to the class II fructose-bisphosphate aldolase family. Zn(2+) is required as a cofactor.

It carries out the reaction beta-D-fructose 1,6-bisphosphate = D-glyceraldehyde 3-phosphate + dihydroxyacetone phosphate. It functions in the pathway carbohydrate degradation; glycolysis; D-glyceraldehyde 3-phosphate and glycerone phosphate from D-glucose: step 4/4. Catalyzes the aldol condensation of dihydroxyacetone phosphate (DHAP or glycerone-phosphate) with glyceraldehyde 3-phosphate (G3P) to form fructose 1,6-bisphosphate (FBP) in gluconeogenesis and the reverse reaction in glycolysis. This Staphylococcus aureus (strain MSSA476) protein is Fructose-bisphosphate aldolase (fba).